We begin with the raw amino-acid sequence, 64 residues long: Large ribosomal subunit protein bL33 (64 aa).

A compositionally biased stretch (basic and acidic residues) spans 16 to 25 (EARTSSEPRR). The segment at 16 to 39 (EARTSSEPRRSNGISRYTTEKNKR) is disordered.

Belongs to the bacterial ribosomal protein bL33 family.

The sequence is that of Large ribosomal subunit protein bL33 from Prochlorococcus marinus (strain MIT 9515).